Here is a 252-residue protein sequence, read N- to C-terminus: 3-dehydroquinate dehydratase (252 aa).

Residues Ser21, 46-48, and Arg82 contribute to the 3-dehydroquinate site; that span reads EWR. The active-site Proton donor/acceptor is the His143. The active-site Schiff-base intermediate with substrate is the Lys170. Residues Arg213, Ser232, and Gln236 each coordinate 3-dehydroquinate.

Belongs to the type-I 3-dehydroquinase family. Homodimer.

It carries out the reaction 3-dehydroquinate = 3-dehydroshikimate + H2O. Its pathway is metabolic intermediate biosynthesis; chorismate biosynthesis; chorismate from D-erythrose 4-phosphate and phosphoenolpyruvate: step 3/7. Involved in the third step of the chorismate pathway, which leads to the biosynthesis of aromatic amino acids. Catalyzes the cis-dehydration of 3-dehydroquinate (DHQ) and introduces the first double bond of the aromatic ring to yield 3-dehydroshikimate. The sequence is that of 3-dehydroquinate dehydratase from Escherichia coli (strain K12 / MC4100 / BW2952).